A 143-amino-acid polypeptide reads, in one-letter code: Peptide methionine sulfoxide reductase B9 (143 aa).

Residues 19 to 140 (DQDWRAILSP…NSVSLKFSEI (122 aa)) enclose the MsrB domain. Zn(2+) is bound by residues cysteine 58, cysteine 61, cysteine 104, and cysteine 107. The cysteines at positions 76 and 129 are disulfide-linked. The active-site Nucleophile is cysteine 129.

The protein belongs to the MsrB Met sulfoxide reductase family. Zn(2+) is required as a cofactor.

The protein resides in the cytoplasm. It is found in the cytosol. The catalysed reaction is L-methionyl-[protein] + [thioredoxin]-disulfide + H2O = L-methionyl-(R)-S-oxide-[protein] + [thioredoxin]-dithiol. In terms of biological role, catalyzes the reduction of methionine sulfoxide (MetSO) to methionine in proteins. Plays a protective role against oxidative stress by restoring activity to proteins that have been inactivated by methionine oxidation. MSRB family specifically reduces the MetSO R-enantiomer. In Arabidopsis thaliana (Mouse-ear cress), this protein is Peptide methionine sulfoxide reductase B9 (MSRB9).